A 124-amino-acid chain; its full sequence is MNNVLFVALGGSIGAVLRYLISLLMLQVFGSGFPFGTLVVNILGSFLMGVIFALGQVSELSPEIKAFIGVGMLGALTTFSTFSNESLLLMQEGELVKAVLNVVVNVGVCIFVVYLGQQLVFSRF.

The next 4 membrane-spanning stretches (helical) occupy residues 4 to 24 (VLFV…ISLL), 35 to 55 (FGTL…FALG), 62 to 82 (PEIK…FSTF), and 95 to 115 (LVKA…VVYL). Na(+) is bound by residues Gly74 and Thr77.

This sequence belongs to the fluoride channel Fluc/FEX (TC 1.A.43) family.

The protein resides in the cell inner membrane. It carries out the reaction fluoride(in) = fluoride(out). Its activity is regulated as follows. Na(+) is not transported, but it plays an essential structural role and its presence is essential for fluoride channel function. Functionally, fluoride-specific ion channel. Important for reducing fluoride concentration in the cell, thus reducing its toxicity. The polypeptide is Fluoride-specific ion channel FluC (Shewanella halifaxensis (strain HAW-EB4)).